The following is a 385-amino-acid chain: Spermidine/putrescine import ATP-binding protein PotA (385 aa).

The ABC transporter domain occupies 6–238; sequence IEFKNVSKVF…PINHFVATFI (233 aa). Residue 40–47 coordinates ATP; it reads GASGSGKS.

Belongs to the ABC transporter superfamily. Spermidine/putrescine importer (TC 3.A.1.11.1) family. In terms of assembly, the complex is composed of two ATP-binding proteins (PotA), two transmembrane proteins (PotB and PotC) and a solute-binding protein (PotD).

It localises to the cell membrane. The catalysed reaction is ATP + H2O + polyamine-[polyamine-binding protein]Side 1 = ADP + phosphate + polyamineSide 2 + [polyamine-binding protein]Side 1.. Functionally, part of the ABC transporter complex PotABCD involved in spermidine/putrescine import. Responsible for energy coupling to the transport system. This chain is Spermidine/putrescine import ATP-binding protein PotA, found in Streptococcus pneumoniae serotype 4 (strain ATCC BAA-334 / TIGR4).